A 405-amino-acid polypeptide reads, in one-letter code: Syndecan-3 (405 aa).

The signal sequence occupies residues Met1 to Ala22. At Gln23 to Glu347 the chain is on the extracellular side. The disordered stretch occupies residues Glu31 to Ser59. A compositionally biased stretch (acidic residues) spans Gly38–Asp52. O-linked (Xyl...) (glycosaminoglycan) serine glycans are attached at residues Ser39, Ser55, Ser57, Ser59, and Ser66. 2 disordered regions span residues Thr134–Thr159 and Thr191–Asn301. Over residues Thr191–Thr201 the composition is skewed to low complexity. The span at Ser202–Ala237 shows a compositional bias: polar residues. O-linked (Xyl...) (glycosaminoglycan) serine glycans are attached at residues Ser280, Ser283, and Ser330. The chain crosses the membrane as a helical span at residues Val348–Tyr372. The Cytoplasmic segment spans residues Arg373–Ala405.

The protein belongs to the syndecan proteoglycan family. In terms of processing, O-glycosylated within the Thr/Ser-rich region which could interact with lectin domains on other molecules. As to expression, proximal chondrogenic central core of embryonic limb buds where cartilage differentiation is being initiated.

The protein resides in the membrane. Functionally, cell surface proteoglycan that may bear both heparan sulfate and chondroitin sulfate. The multiple functional domains provide potential sites for mediating the adhesive cell-matrix interactions and cytoskeletal reorganization involved in limb chondrogenesis. Interaction with other matrix ligands as well as phosphorylation and shedding of the ectodomain might be involved in cell shape changes that occur during chondrogenesis. Furthermore, shedding of the ectodomain might break the adhesive interactions that promoted condensation, thus facilitating the deposition of cartilage matrix molecules. This is Syndecan-3 (SDC3) from Gallus gallus (Chicken).